A 392-amino-acid chain; its full sequence is Iripin-1 (392 aa).

The first 16 residues, 1 to 16 (MKPLVPLLFLLVSCRA), serve as a signal peptide directing secretion. N104, N196, and N265 each carry an N-linked (GlcNAc...) asparagine glycan.

This sequence belongs to the serpin family. As to quaternary structure, interacts with human KLKB1. Interacts with human ST14. Interacts with human PLG (plasmin). As to expression, highly expressed in salivary gland. Expressed in midgut and ovary.

It localises to the secreted. Its function is as follows. Serine protease inhibitor that modulates blood feeding of ticks on vertebrate species. Modestly inhibits human trypsin, plasma kallikrein (KLKB1), matriptase (ST14) and plasmin (PLG) via a classic serpin inhibitory mechanism. Modestly reduces enzymatic activity of human alpha-chymotrypsin, coagulation factor Xa (F10), factor XIIa (F12), cathepsin G (CTSG), tPA/tissue-type plasminogen activator (PLAT) and uPA/urokinase-type plasminogen activator (PLAU). Probably acts as a substrate rather than an inhibitor for the human neutrophil elastase (ELANE) and thus reduces its enzymatic activity in in vitro assays. Decreases expression of adhesion molecules VCAM1 and CD99 on the surface of human cells. Increases the production of chemokines for neutrophils and monocytes, such as KC/CXCL1, MIP-2/CXCL2 and MIP-1/CCL2, and anti-inflammatory cytokine IL10 in mouse inflammation models. Reduces the recruitment of mouse neutrophils and monocytes to the site of inflammation. Decreases expression of CXCR2 on the surface of mouse neutrophils. Increases expression of integrin ITGAM/ITGB2 on the surface of mouse neutrophils. The polypeptide is Iripin-1 (Ixodes ricinus (Common tick)).